We begin with the raw amino-acid sequence, 258 residues long: Type III pantothenate kinase 1 (258 aa).

An ATP-binding site is contributed by 6-13; the sequence is DMGNSHIH. Position 107–110 (107–110) interacts with substrate; sequence GADR. The active-site Proton acceptor is the D109. D130 is a K(+) binding site. Residue T133 coordinates ATP. T185 lines the substrate pocket.

Belongs to the type III pantothenate kinase family. In terms of assembly, homodimer. It depends on NH4(+) as a cofactor. Requires K(+) as cofactor.

It is found in the cytoplasm. The enzyme catalyses (R)-pantothenate + ATP = (R)-4'-phosphopantothenate + ADP + H(+). It functions in the pathway cofactor biosynthesis; coenzyme A biosynthesis; CoA from (R)-pantothenate: step 1/5. Catalyzes the phosphorylation of pantothenate (Pan), the first step in CoA biosynthesis. The sequence is that of Type III pantothenate kinase 1 from Francisella tularensis subsp. tularensis (strain FSC 198).